Here is a 166-residue protein sequence, read N- to C-terminus: Small ribosomal subunit protein uS5 (166 aa).

The 64-residue stretch at 11 to 74 (LDDNVVAINR…EAAKKNLITV (64 aa)) folds into the S5 DRBM domain.

It belongs to the universal ribosomal protein uS5 family. Part of the 30S ribosomal subunit. Contacts proteins S4 and S8.

Functionally, with S4 and S12 plays an important role in translational accuracy. Located at the back of the 30S subunit body where it stabilizes the conformation of the head with respect to the body. This Lactiplantibacillus plantarum (strain ATCC BAA-793 / NCIMB 8826 / WCFS1) (Lactobacillus plantarum) protein is Small ribosomal subunit protein uS5.